Consider the following 173-residue polypeptide: Flavodoxin 2 (173 aa).

The Flavodoxin-like domain occupies 3–165; the sequence is MGLFYGSSTC…RIQTWCEQIL (163 aa).

Belongs to the flavodoxin family. Requires FMN as cofactor.

In terms of biological role, low-potential electron donor to a number of redox enzymes. This chain is Flavodoxin 2 (fldB), found in Salmonella typhi.